A 433-amino-acid polypeptide reads, in one-letter code: Glutamate-1-semialdehyde 2,1-aminomutase (433 aa).

K266 carries the post-translational modification N6-(pyridoxal phosphate)lysine.

It belongs to the class-III pyridoxal-phosphate-dependent aminotransferase family. HemL subfamily. As to quaternary structure, homodimer. Pyridoxal 5'-phosphate is required as a cofactor.

The protein resides in the cytoplasm. It catalyses the reaction (S)-4-amino-5-oxopentanoate = 5-aminolevulinate. Its pathway is porphyrin-containing compound metabolism; protoporphyrin-IX biosynthesis; 5-aminolevulinate from L-glutamyl-tRNA(Glu): step 2/2. The protein is Glutamate-1-semialdehyde 2,1-aminomutase of Psychrobacter arcticus (strain DSM 17307 / VKM B-2377 / 273-4).